The sequence spans 464 residues: ATP synthase subunit beta (464 aa).

153–160 (GGAGVGKT) provides a ligand contact to ATP.

The protein belongs to the ATPase alpha/beta chains family. F-type ATPases have 2 components, CF(1) - the catalytic core - and CF(0) - the membrane proton channel. CF(1) has five subunits: alpha(3), beta(3), gamma(1), delta(1), epsilon(1). CF(0) has three main subunits: a(1), b(2) and c(9-12). The alpha and beta chains form an alternating ring which encloses part of the gamma chain. CF(1) is attached to CF(0) by a central stalk formed by the gamma and epsilon chains, while a peripheral stalk is formed by the delta and b chains.

Its subcellular location is the cell membrane. It carries out the reaction ATP + H2O + 4 H(+)(in) = ADP + phosphate + 5 H(+)(out). In terms of biological role, produces ATP from ADP in the presence of a proton gradient across the membrane. The catalytic sites are hosted primarily by the beta subunits. The protein is ATP synthase subunit beta of Clostridium novyi (strain NT).